The primary structure comprises 289 residues: Protease HtpX homolog (289 aa).

The next 2 helical transmembrane spans lie at 10-30 (TAAL…VIGS) and 34-54 (STTP…YGYW). His-138 contributes to the Zn(2+) binding site. Glu-139 is a catalytic residue. His-142 provides a ligand contact to Zn(2+). The next 2 helical transmembrane spans lie at 153 to 173 (VAAA…IFGG) and 182 to 202 (LAVM…QSAI). Glu-207 lines the Zn(2+) pocket.

This sequence belongs to the peptidase M48B family. Requires Zn(2+) as cofactor.

It is found in the cell membrane. This chain is Protease HtpX homolog, found in Arthrobacter sp. (strain FB24).